We begin with the raw amino-acid sequence, 699 residues long: Triacylglycerol hydrolase DDHD2 (699 aa).

Over residues 1–11 (MSSGESHQEQL) the composition is skewed to polar residues. The disordered stretch occupies residues 1–25 (MSSGESHQEQLSQSDPSPSPNSCSS). Over residues 12-25 (SQSDPSPSPNSCSS) the composition is skewed to low complexity. In terms of domain architecture, WWE spans 30 to 112 (DMDASSSYEP…WDELPSEVRR (83 aa)). Residue Ser-351 is the Nucleophile of the active site. The SAM domain maps to 383 to 445 (DRGDASTLEE…KILNHFSARK (63 aa)). At Ser-447 the chain carries Phosphoserine. The DDHD domain occupies 484–688 (LNYKPEIFFA…VLLVLKEIYQ (205 aa)). Residues 599-635 (QASETAEETEAEPESSSEKSNEANTEEPPVEVKEEAP) form a disordered region. Residues 603–613 (TAEETEAEPES) show a composition bias toward acidic residues.

This sequence belongs to the PA-PLA1 family. Forms homooligomers and, to a much smaller extent, heterooligomers with DDHD1.

The protein resides in the cytoplasm. The protein localises to the cytosol. Its subcellular location is the endoplasmic reticulum-Golgi intermediate compartment. It is found in the golgi apparatus. It localises to the cis-Golgi network. The catalysed reaction is a triacylglycerol + H2O = a diacylglycerol + a fatty acid + H(+). It catalyses the reaction a diacylglycerol + H2O = a monoacylglycerol + a fatty acid + H(+). The enzyme catalyses a 1,3-diacylglycerol + H2O = a 1-acylglycerol + a fatty acid + H(+). It carries out the reaction a 1-acylglycerol + H2O = glycerol + a fatty acid + H(+). The catalysed reaction is 1,2,3-tri-(9Z-octadecenoyl)-glycerol + H2O = di-(9Z)-octadecenoylglycerol + (9Z)-octadecenoate + H(+). It catalyses the reaction di-(9Z)-octadecenoylglycerol + H2O = (9Z-octadecenoyl)-glycerol + (9Z)-octadecenoate + H(+). The enzyme catalyses 1,3-di-(9Z-octadecenoyl)-glycerol + H2O = 1-(9Z-octadecenoyl)-glycerol + (9Z)-octadecenoate + H(+). It carries out the reaction trihexadecanoylglycerol + H2O = dihexadecanoylglycerol + hexadecanoate + H(+). The catalysed reaction is 1,2-di-(9Z-octadecenoyl)-sn-glycero-3-phosphocholine + H2O = (9Z-octadecenoyl)-sn-glycero-3-phosphocholine + (9Z)-octadecenoate + H(+). It catalyses the reaction 1-(9Z-octadecenoyl)-glycerol + H2O = glycerol + (9Z)-octadecenoate + H(+). The enzyme catalyses 1,2-di-(9Z-octadecenoyl)-sn-glycero-3-phosphate + H2O = 2-(9Z-octadecenoyl)-sn-glycero-3-phosphate + (9Z)-octadecenoate + H(+). It carries out the reaction 1-hexadecanoyl-2-(9Z-octadecenoyl)-sn-glycero-3-phosphate + H2O = 2-(9Z-octadecenoyl)-sn-glycero-3-phosphate + hexadecanoate + H(+). The catalysed reaction is 1-hexadecanoyl-2-(9Z-octadecenoyl)-sn-glycero-3-phosphoethanolamine + H2O = 2-(9Z-octadecenoyl)-sn-glycero-3-phosphoethanolamine + hexadecanoate + H(+). It catalyses the reaction 1-hexadecanoyl-2-(9Z-octadecenoyl)-sn-glycero-3-phospho-L-serine + H2O = 2-(9Z-octadecenoyl)-sn-glycero-3-phospho-L-serine + hexadecanoate + H(+). The enzyme catalyses 1-hexadecanoyl-2-(9Z-octadecenoyl)-sn-glycero-3-phosphocholine + H2O = 2-(9Z-octadecenoyl)-sn-glycero-3-phosphocholine + hexadecanoate + H(+). Its function is as follows. Diacylglycerol (DAG) and triacylglycerol (TAG) lipase that is required for proper lipid homeostasis in the central nervous system. It cooperates with PNPLA2/ATGL in neuronal TAG catabolism and hydrolyzes sn-1,3-DAG downstream of PNPLA2/ATGL. In vitro, also acts as a phospholipase that hydrolyzes preferentially phosphatidic acids, including 1,2-dioleoyl-sn-phosphatidic acid, phosphatidylcholine and phosphatidylethanolamine. Specifically binds to phosphatidylinositol 3-phosphate (PI(3)P), phosphatidylinositol 4-phosphate (PI(4)P), phosphatidylinositol 5-phosphate (PI(5)P) and possibly phosphatidylinositol 4,5-bisphosphate (PI(4,5)P2). May be involved in the maintenance of the endoplasmic reticulum and/or Golgi structures. May regulate the transport between Golgi apparatus and plasma membrane. This chain is Triacylglycerol hydrolase DDHD2, found in Mus musculus (Mouse).